The primary structure comprises 310 residues: Ribosomal RNA small subunit methyltransferase H (310 aa).

S-adenosyl-L-methionine-binding positions include 35-37, Asp52, Phe79, Asp100, and Gln107; that span reads GGH.

Belongs to the methyltransferase superfamily. RsmH family.

The protein resides in the cytoplasm. It carries out the reaction cytidine(1402) in 16S rRNA + S-adenosyl-L-methionine = N(4)-methylcytidine(1402) in 16S rRNA + S-adenosyl-L-homocysteine + H(+). In terms of biological role, specifically methylates the N4 position of cytidine in position 1402 (C1402) of 16S rRNA. The polypeptide is Ribosomal RNA small subunit methyltransferase H (Anaeromyxobacter dehalogenans (strain 2CP-1 / ATCC BAA-258)).